We begin with the raw amino-acid sequence, 1379 residues long: ABC multidrug transporter MDR2 (1379 aa).

Residues 65-85 (IALIVIGTIAGIGAGIPFPLL) form a helical membrane-spanning segment. An ABC transmembrane type-1 1 domain is found at 69–367 (VIGTIAGIGA…MAPFMHIFAS (299 aa)). The N-linked (GlcNAc...) asparagine glycan is linked to asparagine 97. A run of 5 helical transmembrane segments spans residues 119 to 139 (VLQV…HTGC), 193 to 213 (KVGL…VAFL), 215 to 235 (VATI…MAFG), 301 to 321 (IQFG…FWQG), and 336 to 356 (VSVG…FVLS). The region spanning 403-682 (IELQDVTFNY…DGVYAGMVRL (280 aa)) is the ABC transporter 1 domain. 438–445 (GTSGSGKS) contributes to the ATP binding site. 2 N-linked (GlcNAc...) asparagine glycosylation sites follow: asparagine 552 and asparagine 633. Residues 738–758 (YMPEEADSLPTEPENEKEKPK) form a disordered region. Helical transmembrane passes span 781 to 801 (LGLI…VIFG), 820 to 840 (GMLF…AVIV), 881 to 901 (LLVA…GTTI), and 920 to 942 (VIAW…SGVL). The ABC transmembrane type-1 2 domain maps to 781 to 1068 (LGLITSIMIG…MFALVPDISK (288 aa)). N-linked (GlcNAc...) asparagine glycosylation occurs at asparagine 989. Transmembrane regions (helical) follow at residues 1008 to 1028 (FWLS…YWWG) and 1032 to 1052 (ILAG…LLFS). Positions 1135 to 1374 (VQFRNVHFRY…CESYRANVIH (240 aa)) constitute an ABC transporter 2 domain. 1170–1177 (GPSGSGKS) is an ATP binding site.

It belongs to the ABC transporter superfamily. ABCB family. Multidrug resistance exporter (TC 3.A.1.201) subfamily.

It localises to the cell membrane. Pleiotropic ABC efflux transporter that may be involved in the modulation susceptibility to a wide range of unrelated cytotoxic compounds. The chain is ABC multidrug transporter MDR2 from Trichophyton interdigitale (strain MR816).